A 314-amino-acid chain; its full sequence is Olfactory receptor 10T2 (314 aa).

Topologically, residues 1 to 26 are extracellular; the sequence is MRGFNKTTVVTQFILVGFSSLGELQL. N-linked (GlcNAc...) asparagine glycosylation occurs at N5. The helical transmembrane segment at 27-47 threads the bilayer; it reads LLFVIFLLLYLTILVANVTIM. Over 48-55 the chain is Cytoplasmic; that stretch reads AVIRFSWT. Residues 56 to 76 form a helical membrane-spanning segment; that stretch reads LHTPMYGFLFILSFSESCYTF. The Extracellular segment spans residues 77–100; the sequence is VIIPQLLVHLLSDTKTISFMACAT. C98 and C190 are oxidised to a cystine. The chain crosses the membrane as a helical span at residues 101–121; the sequence is QLFFFLGFACTNCLLIAVMGY. Residues 122-140 lie on the Cytoplasmic side of the membrane; that stretch reads DRYVAICHPLRYTLIINKR. A helical transmembrane segment spans residues 141–161; sequence LGLELISLSGATGFFIALVAT. The Extracellular portion of the chain corresponds to 162–198; that stretch reads NLICDMRFCGPNRVNHYFCDMAPVIKLACTDTHVKEL. The chain crosses the membrane as a helical span at residues 199-218; that stretch reads ALFSLSILVIMVPFLLILIS. At 219–237 the chain is on the cytoplasmic side; sequence YGFIVNTILKIPSAEGKKA. Residues 238–258 form a helical membrane-spanning segment; that stretch reads FVTCASHLTVVFVHYGCASII. At 259 to 271 the chain is on the extracellular side; sequence YLRPKSKSASDKD. A helical membrane pass occupies residues 272–292; the sequence is QLVAVTYTVVTPLLNPLVYSL. The Cytoplasmic portion of the chain corresponds to 293–314; sequence RNKEVKTALKRVLGMPVATKMS.

This sequence belongs to the G-protein coupled receptor 1 family.

It localises to the cell membrane. Functionally, odorant receptor. The chain is Olfactory receptor 10T2 (OR10T2) from Homo sapiens (Human).